A 214-amino-acid polypeptide reads, in one-letter code: 3-demethoxyubiquinol 3-hydroxylase (214 aa).

Glutamate 63, glutamate 93, histidine 96, glutamate 145, glutamate 177, and histidine 180 together coordinate Fe cation.

The protein belongs to the COQ7 family. Requires Fe cation as cofactor.

The protein localises to the cell membrane. It carries out the reaction a 5-methoxy-2-methyl-3-(all-trans-polyprenyl)benzene-1,4-diol + AH2 + O2 = a 3-demethylubiquinol + A + H2O. It functions in the pathway cofactor biosynthesis; ubiquinone biosynthesis. In terms of biological role, catalyzes the hydroxylation of 2-nonaprenyl-3-methyl-6-methoxy-1,4-benzoquinol during ubiquinone biosynthesis. This is 3-demethoxyubiquinol 3-hydroxylase from Psychrobacter cryohalolentis (strain ATCC BAA-1226 / DSM 17306 / VKM B-2378 / K5).